We begin with the raw amino-acid sequence, 471 residues long: Serine/threonine-protein kinase AtPK2/AtPK19 (471 aa).

The segment at 1 to 21 (MVSSQCSVANKNQTGKPFQKH) is disordered. Residues 140-395 (FEVLKVVGQG…AEEIKKHKWF (256 aa)) enclose the Protein kinase domain. Residues 146 to 154 (VGQGAFGKV) and Lys169 contribute to the ATP site. Asp263 serves as the catalytic Proton acceptor. Residues 281–307 (DFGLAKEFEENTRSNSMCGTTEYMAPE) are activation loop. Phosphoserine; by PDPK1 is present on Ser296. In terms of domain architecture, AGC-kinase C-terminal spans 396–466 (KAINWKKLEA…VRPPHSFLHR (71 aa)). A Phosphothreonine; by TOR modification is found at Thr455.

It belongs to the protein kinase superfamily. AGC Ser/Thr protein kinase family. S6 kinase subfamily. Interacts with TAP46. Binds to MRF1. Post-translationally, undergoes serine-specific autophosphorylation. Phosphorylated at Thr-455 by TOR.

It catalyses the reaction L-seryl-[protein] + ATP = O-phospho-L-seryl-[protein] + ADP + H(+). It carries out the reaction L-threonyl-[protein] + ATP = O-phospho-L-threonyl-[protein] + ADP + H(+). With respect to regulation, activated by PDK1. Downstream effector of TOR signaling pathway. May be involved in adaptation of plant to cold or high-salt conditions. Mediates the phosphorylation of MRFs (e.g. MRF1). This chain is Serine/threonine-protein kinase AtPK2/AtPK19 (ATPK2), found in Arabidopsis thaliana (Mouse-ear cress).